The chain runs to 579 residues: 2-isopropylmalate synthase (579 aa).

Residues 40-314 form the Pyruvate carboxyltransferase domain; it reads PRWCAVDLRD…DPMIDFSDID (275 aa). Residues Asp-49, His-253, His-255, and Asn-289 each contribute to the Mg(2+) site. The interval 456–579 is regulatory domain; sequence SSKEDGQWGR…VNRAIRDAQA (124 aa).

This sequence belongs to the alpha-IPM synthase/homocitrate synthase family. LeuA type 2 subfamily. As to quaternary structure, homodimer. Requires Mg(2+) as cofactor.

It localises to the cytoplasm. It carries out the reaction 3-methyl-2-oxobutanoate + acetyl-CoA + H2O = (2S)-2-isopropylmalate + CoA + H(+). Its pathway is amino-acid biosynthesis; L-leucine biosynthesis; L-leucine from 3-methyl-2-oxobutanoate: step 1/4. Functionally, catalyzes the condensation of the acetyl group of acetyl-CoA with 3-methyl-2-oxobutanoate (2-ketoisovalerate) to form 3-carboxy-3-hydroxy-4-methylpentanoate (2-isopropylmalate). This chain is 2-isopropylmalate synthase, found in Arthrobacter sp. (strain FB24).